The sequence spans 213 residues: Large ribosomal subunit protein uL3 (213 aa).

It belongs to the universal ribosomal protein uL3 family. As to quaternary structure, part of the 50S ribosomal subunit. Forms a cluster with proteins L14 and L19.

Its function is as follows. One of the primary rRNA binding proteins, it binds directly near the 3'-end of the 23S rRNA, where it nucleates assembly of the 50S subunit. In Bifidobacterium longum (strain DJO10A), this protein is Large ribosomal subunit protein uL3.